The chain runs to 43 residues: Protein PsbN (43 aa).

The chain crosses the membrane as a helical span at residues 4–24; the sequence is AIVLIISVGAALVAVTGYGIY.

Belongs to the PsbN family.

Its subcellular location is the cellular thylakoid membrane. In terms of biological role, may play a role in photosystem I and II biogenesis. This chain is Protein PsbN, found in Trichormus variabilis (strain ATCC 29413 / PCC 7937) (Anabaena variabilis).